Consider the following 96-residue polypeptide: Neutrophil defensin 8 (96 aa).

An N-terminal signal peptide occupies residues 1 to 19; that stretch reads MRTLVILAAILLVALQAQA. A propeptide spanning residues 20–66 is cleaved from the precursor; sequence EPLQARTDEATAAQEQIPTDNPEVVVSLAWDESLAPKDSVPGLRKNM. 3 cysteine pairs are disulfide-bonded: Cys68-Cys96, Cys70-Cys85, and Cys75-Cys95.

This sequence belongs to the alpha-defensin family.

It localises to the secreted. Its function is as follows. Probable antibiotic and antifungal activity. In Macaca mulatta (Rhesus macaque), this protein is Neutrophil defensin 8.